Consider the following 75-residue polypeptide: Theromacin (75 aa).

5 disulfide bridges follow: Cys2–Cys9, Cys24–Cys28, Cys31–Cys73, Cys39–Cys47, and Cys57–Cys59.

Belongs to the macin family.

The protein resides in the secreted. Functionally, has a bactericial activity. The polypeptide is Theromacin (Hirudo medicinalis (Medicinal leech)).